Consider the following 3032-residue polypeptide: Compactin nonaketide synthase, polyketide synthase component (3032 aa).

The Ketosynthase family 3 (KS3) domain maps to 8-447 (NEPIVVVGSG…GTNAHAIIEE (440 aa)). Active-site for beta-ketoacyl synthase activity residues include cysteine 181, histidine 320, and histidine 367. Residues 560–901 (VFTGQGAQWP…GYIWERFGVR (342 aa)) form an acyl and malonyl transferase region. The active-site For malonyltransferase activity is serine 654. Positions 953–1089 (HLLLGKLSSY…GQIVITLGEA (137 aa)) are N-terminal hotdog fold. Residues 953–1261 (HLLLGKLSSY…FKPFSPPTAS (309 aa)) form the PKS/mFAS DH domain. The active-site Proton acceptor; for dehydratase activity is the histidine 985. Residues 985–997 (HALQGQTVFPAAG) form a dehydratase-like region. Residues 1106 to 1261 (MNNVNIDFFY…FKPFSPPTAS (156 aa)) are C-terminal hotdog fold. Aspartate 1168 (proton donor; for dehydratase activity) is an active-site residue. Residues 1506 to 1544 (YDLIIASDVLHASSNFEEKLAHIRSLLKPGGHLVTFGVT) form a methyltransferase region. The Carrier domain maps to 2441–2520 (DQVRQIVIDG…DLADDAATRL (80 aa)). Serine 2480 bears the O-(pantetheine 4'-phosphoryl)serine mark. Residues 2531 to 2580 (IGDSTGTSDSGASPTPTDSHDEASSATSTDASSAEEDEEQEDDNEQGGRK) are disordered. Residues 2532-2547 (GDSTGTSDSGASPTPT) show a composition bias toward low complexity. Residues 2563-2575 (SAEEDEEQEDDNE) show a composition bias toward acidic residues. A peptide synthetase elongation region spans residues 2586–2946 (RLSLGQEYSW…PKTQTHAPLF (361 aa)).

It depends on pantetheine 4'-phosphate as a cofactor.

The catalysed reaction is holo-[compactin nonaketide synthase] + 9 malonyl-CoA + 11 NADPH + 20 H(+) = dihydro-ML-236C-[compactin nonaketide synthase] + 9 CO2 + 11 NADP(+) + 9 CoA + 6 H2O. It functions in the pathway polyketide biosynthesis. Nonaketide synthase; part of the gene cluster that mediates the biosynthesis of compactin, also known as mevastatin or ML-236B, and which acts as a potent competitive inhibitor of HMG-CoA reductase. Compactin biosynthesis is performed in two stages. The first stage is catalyzed by the nonaketide synthase mlcA, which belongs to type I polyketide synthases and catalyzes the iterative nine-step formation of the polyketide. This PKS stage is completed by the action of dehydrogenase mlcG, which catalyzes the NADPH-dependent reduction of the unsaturated tetra-, penta- and heptaketide intermediates that arise during the mlcA-mediated biosynthesis of the nonaketide chain and leads to dihydro-ML-236C carboxylate. Covalently bound dihydro-ML-236C carboxylate is released from mlcA by the mlcF esterase. Conversion of dihydro-ML-236C carboxylate into ML-236A carboxylate is subsequently performed with the participation of molecular oxygen and P450 monoogygenase mlcC. Finally, mlcH performs the conversion of ML-236A carboxylate to ML-236B/compactin carboxylate through the addition of the side-chain diketide moiety produced by the diketide synthase mlcB. The chain is Compactin nonaketide synthase, polyketide synthase component from Penicillium citrinum.